A 147-amino-acid chain; its full sequence is Truncated RecQ DNA helicase-like protein C212.06c (147 aa).

The region spanning 1-72 (MGVRLVVHYR…CVRSFLASEM (72 aa)) is the Helicase C-terminal domain. Residues 100-147 (ETPKPAIATHSRYNASFSSSPPPQPGSSSGMSAMNTNTTSTTPVSGKT) are disordered. Low complexity predominate over residues 125 to 141 (GSSSGMSAMNTNTTSTT).

The protein belongs to the helicase family. RecQ subfamily.

Truncated ATP-dependent 3'-5' DNA helicase. The sequence is that of Truncated RecQ DNA helicase-like protein C212.06c from Schizosaccharomyces pombe (strain 972 / ATCC 24843) (Fission yeast).